Consider the following 281-residue polypeptide: Probable protein phosphatase 2C 9 (281 aa).

The region spanning 33 to 280 (KYGFSLVKGK…DDISCVVVRF (248 aa)) is the PPM-type phosphatase domain. Positions 70, 71, 232, and 271 each coordinate Mn(2+).

This sequence belongs to the PP2C family. Interacts with phytochromes (via N-terminus). It depends on Mg(2+) as a cofactor. Mn(2+) serves as cofactor.

The protein resides in the nucleus. The catalysed reaction is O-phospho-L-seryl-[protein] + H2O = L-seryl-[protein] + phosphate. It carries out the reaction O-phospho-L-threonyl-[protein] + H2O = L-threonyl-[protein] + phosphate. Involved in the regulation of phytochrome signaling. May regulate phytochrome-interacting factor 3 (PIF3) through the dephosphorylation of phytochrome. This is Probable protein phosphatase 2C 9 from Arabidopsis thaliana (Mouse-ear cress).